The chain runs to 311 residues: JNK1/MAPK8-associated membrane protein (311 aa).

Residues 1–57 (MAVDIQPACLGLYCGKTLLFKNGSTEIYGECGVCPRGQRTNAQKYCQPCTESPELYD) are Lumenal-facing. Residue N22 is glycosylated (N-linked (GlcNAc...) asparagine). Residues 58 to 78 (WLYLGFMAMLPLVLHWFFIEW) form a helical membrane-spanning segment. Over 79 to 87 (YSGKKSSSA) the chain is Cytoplasmic. The chain crosses the membrane as a helical span at residues 88–108 (LFQHITALFECSMAAIITLLV). Residues 109-149 (SDPVGVLYIRSCRVLMLSDWYTMLYNPSPDYVTTVHCTHEA) lie on the Lumenal side of the membrane. A helical membrane pass occupies residues 150–170 (VYPLYTIVFIYYAFCLVLMML). The Cytoplasmic segment spans residues 171–188 (LRPLLVKKIACGLGKSDR). Residues 189–209 (FKSIYAALYFFPILTVLQAVG) traverse the membrane as a helical segment. Residue G210 is a topological domain, lumenal. The helical transmembrane segment at 211 to 231 (GLLYYAFPYIILVLSLVTLAV) threads the bilayer. Residues 232–250 (YMSASEIENCYDLLVRKKR) lie on the Cytoplasmic side of the membrane. A helical membrane pass occupies residues 251 to 271 (LIVLFSHWLLHAYGIISISRV). The Lumenal segment spans residues 272–277 (DKLEQD). A helical membrane pass occupies residues 278–298 (LPLLALVPTPALFYLFTAKFT). Residues 299–311 (EPSRILSEGANGH) lie on the Cytoplasmic side of the membrane.

Interacts with RNF5 and MAPK8, but not with MAPK9. Binding to MAPK8 occurs before and after exposure to stress, such as UV irradiation. After exposure to stress, interacts with phosphorylated MAPK8. Competes with DUSP10 for MAPK8 binding. Associates with multiple components of the proteasome and with ERAD regulatory proteins including AMFR/GP78, CANX, PSMC1, PSMC2, PSMC3/TBP1, PSMC5, PSMC6, PSMD8, SEC61-ALPHA and UFD1. Interacts with DERL1 (in the presence of misfolded protein CFTR(F508del)). In terms of processing, ubiquitinated by RNF5 via 'Lys-63'-linked ubiquitin linkage in a UBE2N-dependent manner. Ubiquitination decreases association with components of the proteasome and ERAD.

It is found in the endoplasmic reticulum membrane. Regulates the duration of MAPK8 activity in response to various stress stimuli. Facilitates degradation of misfolded endoplasmic reticulum (ER) proteins through the recruitment of components of the proteasome and endoplasmic reticulum-associated degradation (ERAD) system. This Homo sapiens (Human) protein is JNK1/MAPK8-associated membrane protein (JKAMP).